A 393-amino-acid polypeptide reads, in one-letter code: NAD(P)H-quinone oxidoreductase subunit H, chloroplastic (393 aa).

It belongs to the complex I 49 kDa subunit family. As to quaternary structure, NDH is composed of at least 16 different subunits, 5 of which are encoded in the nucleus.

Its subcellular location is the plastid. It localises to the chloroplast thylakoid membrane. It catalyses the reaction a plastoquinone + NADH + (n+1) H(+)(in) = a plastoquinol + NAD(+) + n H(+)(out). The catalysed reaction is a plastoquinone + NADPH + (n+1) H(+)(in) = a plastoquinol + NADP(+) + n H(+)(out). Functionally, NDH shuttles electrons from NAD(P)H:plastoquinone, via FMN and iron-sulfur (Fe-S) centers, to quinones in the photosynthetic chain and possibly in a chloroplast respiratory chain. The immediate electron acceptor for the enzyme in this species is believed to be plastoquinone. Couples the redox reaction to proton translocation, and thus conserves the redox energy in a proton gradient. The protein is NAD(P)H-quinone oxidoreductase subunit H, chloroplastic of Psilotum nudum (Whisk fern).